The chain runs to 119 residues: Large ribosomal subunit protein bL20 (119 aa).

It belongs to the bacterial ribosomal protein bL20 family.

Functionally, binds directly to 23S ribosomal RNA and is necessary for the in vitro assembly process of the 50S ribosomal subunit. It is not involved in the protein synthesizing functions of that subunit. The protein is Large ribosomal subunit protein bL20 of Clostridium botulinum (strain Alaska E43 / Type E3).